The following is a 757-amino-acid chain: Polyribonucleotide nucleotidyltransferase (757 aa).

Mg(2+) contacts are provided by aspartate 488 and aspartate 494. Residues 555 to 614 (PKLYTMKINAEKIRDVIGKGGAVIRALTEETGCQINIEEDGTITIAATDAAKADIAKRRI) form the KH domain. The S1 motif domain maps to 624–692 (GKIYEGPVTK…ERGRVKLSMK (69 aa)). The tract at residues 693-757 (VLAERPAPGS…ADTGSGQRVG (65 aa)) is disordered. Over residues 720–736 (ALAEREPRREMRDHGHP) the composition is skewed to basic and acidic residues. Residues 737-747 (PSEQQQQQSPP) are compositionally biased toward low complexity.

It belongs to the polyribonucleotide nucleotidyltransferase family. Mg(2+) serves as cofactor.

Its subcellular location is the cytoplasm. The enzyme catalyses RNA(n+1) + phosphate = RNA(n) + a ribonucleoside 5'-diphosphate. Functionally, involved in mRNA degradation. Catalyzes the phosphorolysis of single-stranded polyribonucleotides processively in the 3'- to 5'-direction. This is Polyribonucleotide nucleotidyltransferase from Verminephrobacter eiseniae (strain EF01-2).